An 806-amino-acid chain; its full sequence is Glycerol-3-phosphate acyltransferase (806 aa).

Positions C305–M310 match the HXXXXD motif motif.

It belongs to the GPAT/DAPAT family.

It localises to the cell inner membrane. The catalysed reaction is sn-glycerol 3-phosphate + an acyl-CoA = a 1-acyl-sn-glycero-3-phosphate + CoA. The protein operates within phospholipid metabolism; CDP-diacylglycerol biosynthesis; CDP-diacylglycerol from sn-glycerol 3-phosphate: step 1/3. This chain is Glycerol-3-phosphate acyltransferase, found in Salmonella paratyphi A (strain ATCC 9150 / SARB42).